Consider the following 240-residue polypeptide: Zein-alpha M6 (240 aa).

The signal sequence occupies residues 1–21 (MATKIFSLLMLLALSTCVANA).

The protein belongs to the zein family.

Functionally, zeins are major seed storage proteins. The chain is Zein-alpha M6 from Zea mays (Maize).